A 109-amino-acid polypeptide reads, in one-letter code: Putative polyketide cyclase (109 aa).

It to polyketide cyclases.

Functionally, involved in developmentally regulated synthesis of a compound biosynthetically related to polyketide antibiotics which is essential for spore color in Streptomyces halstedii. In Streptomyces halstedii, this protein is Putative polyketide cyclase (sch4).